The chain runs to 377 residues: Lipoyl synthase, mitochondrial (377 aa).

Residues 1-77 constitute a mitochondrion transit peptide; the sequence is MFRRGGRILN…LPNGSVHKRL (77 aa). The [4Fe-4S] cluster site is built by cysteine 107, cysteine 112, cysteine 118, cysteine 138, cysteine 142, cysteine 145, and serine 353. Residues 123 to 342 enclose the Radical SAM core domain; it reads DKTRATATIM…RKRAEELGFL (220 aa).

It belongs to the radical SAM superfamily. Lipoyl synthase family. [4Fe-4S] cluster is required as a cofactor.

The protein localises to the mitochondrion. The catalysed reaction is [[Fe-S] cluster scaffold protein carrying a second [4Fe-4S](2+) cluster] + N(6)-octanoyl-L-lysyl-[protein] + 2 oxidized [2Fe-2S]-[ferredoxin] + 2 S-adenosyl-L-methionine + 4 H(+) = [[Fe-S] cluster scaffold protein] + N(6)-[(R)-dihydrolipoyl]-L-lysyl-[protein] + 4 Fe(3+) + 2 hydrogen sulfide + 2 5'-deoxyadenosine + 2 L-methionine + 2 reduced [2Fe-2S]-[ferredoxin]. It participates in protein modification; protein lipoylation via endogenous pathway; protein N(6)-(lipoyl)lysine from octanoyl-[acyl-carrier-protein]: step 2/2. Its function is as follows. Catalyzes the radical-mediated insertion of two sulfur atoms into the C-6 and C-8 positions of the octanoyl moiety bound to the lipoyl domains of lipoate-dependent enzymes, thereby converting the octanoylated domains into lipoylated derivatives. The polypeptide is Lipoyl synthase, mitochondrial (Schizosaccharomyces japonicus (strain yFS275 / FY16936) (Fission yeast)).